A 414-amino-acid polypeptide reads, in one-letter code: Argininosuccinate synthase (414 aa).

ATP-binding positions include 15–23 (AYSGGLDTS) and Ala42. The L-citrulline site is built by Tyr93 and Ser98. Residue Gly123 participates in ATP binding. L-aspartate-binding residues include Thr125, Asn129, and Asp130. Asn129 contacts L-citrulline. Arg133, Ser182, Ser191, Glu267, and Tyr279 together coordinate L-citrulline.

The protein belongs to the argininosuccinate synthase family. Type 1 subfamily. As to quaternary structure, homotetramer.

It localises to the cytoplasm. The catalysed reaction is L-citrulline + L-aspartate + ATP = 2-(N(omega)-L-arginino)succinate + AMP + diphosphate + H(+). The protein operates within amino-acid biosynthesis; L-arginine biosynthesis; L-arginine from L-ornithine and carbamoyl phosphate: step 2/3. This is Argininosuccinate synthase from Deinococcus geothermalis (strain DSM 11300 / CIP 105573 / AG-3a).